The following is a 1410-amino-acid chain: DNA-directed RNA polymerase subunit beta' (1410 aa).

Positions 69, 71, 84, and 87 each coordinate Zn(2+). The Mg(2+) site is built by Asp461, Asp463, and Asp465. Positions 810, 884, 891, and 894 each coordinate Zn(2+).

The protein belongs to the RNA polymerase beta' chain family. In terms of assembly, the RNAP catalytic core consists of 2 alpha, 1 beta, 1 beta' and 1 omega subunit. When a sigma factor is associated with the core the holoenzyme is formed, which can initiate transcription. It depends on Mg(2+) as a cofactor. The cofactor is Zn(2+).

The enzyme catalyses RNA(n) + a ribonucleoside 5'-triphosphate = RNA(n+1) + diphosphate. DNA-dependent RNA polymerase catalyzes the transcription of DNA into RNA using the four ribonucleoside triphosphates as substrates. The polypeptide is DNA-directed RNA polymerase subunit beta' (Ehrlichia chaffeensis (strain ATCC CRL-10679 / Arkansas)).